A 535-amino-acid chain; its full sequence is MAELPTAPNGVPSGDYLHRSIDQLRSLGHLTTAQLVHDYKPFNISEFRQNVAERLDYSLKNGLVQHQQQMVMEQQPHPDQQQQQHLHHPQQQQHPPQLKVSYSAPNSPPTPHEQQEQKYDPNRSPPRQQMSSASGSGSNGSSPEEESRRGDGDQAKPYKCGSCSKSFANSSYLSQHTRIHLGIKPYRCEICQRKFTQLSHLQQHIRTHTGDKPYKCRHAGCPKAFSQLSNLQSHSRCHQTDKPFKCNSCYKCFSDEMTLLEHIPKHKDSKHLKTHICNLCGKSYTQETYLQKHLQKHAEKAEKQQHRHTAQVAAHQQHVPASGIGLNLQRQAMNDVNAAYWAKMGADSAAASLAEAIQQQLPQAGGQPYGNFASLQQQHQQQQQELLHHQRLADTPGHSHSPHEEAAGEDLVLRQSTPQHHLQQQQQQQQQQQAQQQQQAQHQPSPGPGNSAFTPLSATVAPPPHLQQHRGPPGSAAAYLYQQNAAAAAAAFPTQLISLHQIRNYAHQPGAAGLIAGDHLALGLSAVNAAKEKAQ.

2 stretches are compositionally biased toward low complexity: residues Met70–Gln97 and Ser131–Ser142. Residues Met70–Pro157 form a disordered region. A compositionally biased stretch (basic and acidic residues) spans Glu145–Lys156. 5 consecutive C2H2-type zinc fingers follow at residues Tyr158–His180, Tyr186–His208, Tyr214–His238, Phe244–His266, and His275–His297. Thr395 carries the post-translational modification Phosphothreonine. Ser399 and Ser401 each carry phosphoserine. Positions Thr417–Ser475 are disordered. Residues Gln419 to Gln443 show a composition bias toward low complexity. Ser475 carries the post-translational modification Phosphoserine. 2 positions are modified to phosphotyrosine: Tyr479 and Tyr481.

The protein belongs to the krueppel C2H2-type zinc-finger protein family. In terms of assembly, interacts with nab; which acts as a coactivator. Interacts with ap. In terms of tissue distribution, largely restricted to subsets of cells in the CNS throughout embryonic and first instar larval (L1) development. Expressed in a population of lateral interneurons, primarily projecting axons in the anterior and posterior commissures. Overlaps with ap within the thoracic ap cluster. By stage 17, it is restricted to 2 neurons within the ap-cluster, with one neuron typically continuing to display higher levels of expression. Selectively expressed at higher levels within the FMRFa Tv neurons. Expressed in all leucokinergic cells.

It localises to the nucleus. Functionally, transcription factor involved in neuronal fate specification. First required in embryonic CNS development to define the number of cells that express apterous (ap) in the ap thoracic cluster of interneurons. Later on, it plays a central role in the combinatorial code of transcription factors that specifies the fate of the Tv neuron in the ap cluster by participating in the transcription regulation of FMRFa in Tv cells. Also required for projection neuron dendritic targeting. This is Zinc finger protein squeeze (sqz) from Drosophila melanogaster (Fruit fly).